The chain runs to 385 residues: Fe-S cluster assembly protein DRE2 (385 aa).

An N-terminal SAM-like domain region spans residues 1–177 (MTSSINILLL…KKLNKNDMTI (177 aa)). The interval 178–240 (NVPQEIDNIT…NDLLKYNNHN (63 aa)) is linker. The tract at residues 200–226 (YFSSDDENSSDGSLSDNANEEEEDDDE) is disordered. Over residues 217-226 (ANEEEEDDDE) the composition is skewed to acidic residues. Positions 261, 275, 278, and 280 each coordinate [2Fe-2S] cluster. The tract at residues 261–280 (CELSLNGGKKRKKACKDCTC) is fe-S binding site A. Residues C348, C351, C359, and C362 each coordinate [4Fe-4S] cluster. 2 short sequence motifs (cx2C motif) span residues 348 to 351 (CGSC) and 359 to 362 (CDGC). The fe-S binding site B stretch occupies residues 348–362 (CGSCALGDAFRCDGC).

The protein belongs to the anamorsin family. As to quaternary structure, monomer. Interacts with TAH18. Interacts with MIA40. [2Fe-2S] cluster is required as a cofactor. It depends on [4Fe-4S] cluster as a cofactor.

It is found in the cytoplasm. The protein localises to the mitochondrion intermembrane space. In terms of biological role, component of the cytosolic iron-sulfur (Fe-S) protein assembly (CIA) machinery required for the maturation of extramitochondrial Fe-S proteins. Part of an electron transfer chain functioning in an early step of cytosolic Fe-S biogenesis, facilitating the de novo assembly of a [4Fe-4S] cluster on the scaffold complex CFD1-NBP35. Electrons are transferred to DRE2 from NADPH via the FAD- and FMN-containing protein TAH18. TAH18-DRE2 are also required for the assembly of the diferric tyrosyl radical cofactor of ribonucleotide reductase (RNR), probably by providing electrons for reduction during radical cofactor maturation in the catalytic small subunit RNR2. In Candida dubliniensis (strain CD36 / ATCC MYA-646 / CBS 7987 / NCPF 3949 / NRRL Y-17841) (Yeast), this protein is Fe-S cluster assembly protein DRE2.